The following is a 111-amino-acid chain: MGLVIKAALGALVVLLIGVLAKTKNYYIAGLIPLFPTFALIAHYIVASERGIEALRATIIFSMWSIIPYFVYLVSLWYFTGMMRLPAAFVGSVACWGISAWVLIICWIKLH.

Over 1–26 the chain is Cytoplasmic; that stretch reads MGLVIKAALGALVVLLIGVLAKTKNY. Residues 27–47 form a helical membrane-spanning segment; sequence YIAGLIPLFPTFALIAHYIVA. The Periplasmic segment spans residues 48–58; the sequence is SERGIEALRAT. The helical transmembrane segment at 59 to 79 threads the bilayer; sequence IIFSMWSIIPYFVYLVSLWYF. The Cytoplasmic portion of the chain corresponds to 80–87; the sequence is TGMMRLPA. The helical transmembrane segment at 88–108 threads the bilayer; that stretch reads AFVGSVACWGISAWVLIICWI. Topologically, residues 109–111 are periplasmic; it reads KLH.

The protein to P.aeruginosa GlpM.

It is found in the cell inner membrane. The protein is Inner membrane protein YdgC (ydgC) of Escherichia coli O157:H7.